The sequence spans 167 residues: Large ribosomal subunit protein uL22 (167 aa).

Residues 120-167 form a disordered region; sequence GSTATTVEDEAPKAKGAKGAKAKKAPAKKAAAKKAPAKKFAGKKTAKR. The span at 134–167 shows a compositional bias: basic residues; the sequence is KGAKGAKAKKAPAKKAAAKKAPAKKFAGKKTAKR.

Belongs to the universal ribosomal protein uL22 family. In terms of assembly, part of the 50S ribosomal subunit.

In terms of biological role, this protein binds specifically to 23S rRNA; its binding is stimulated by other ribosomal proteins, e.g. L4, L17, and L20. It is important during the early stages of 50S assembly. It makes multiple contacts with different domains of the 23S rRNA in the assembled 50S subunit and ribosome. Its function is as follows. The globular domain of the protein is located near the polypeptide exit tunnel on the outside of the subunit, while an extended beta-hairpin is found that lines the wall of the exit tunnel in the center of the 70S ribosome. This chain is Large ribosomal subunit protein uL22, found in Koribacter versatilis (strain Ellin345).